A 307-amino-acid polypeptide reads, in one-letter code: uncharacterized protein (307 aa).

This is an uncharacterized protein from Sinorhizobium fredii (strain NBRC 101917 / NGR234).